A 248-amino-acid polypeptide reads, in one-letter code: UDP-2,3-diacylglucosamine hydrolase (248 aa).

Residues Asp8, His10, Asp41, Asn79, and His114 each contribute to the Mn(2+) site. 79–80 (NR) serves as a coordination point for substrate. Substrate is bound by residues Asp122, Ser160, Asp171, Gln174, and His202. Mn(2+) is bound by residues His202 and His204.

This sequence belongs to the LpxH family. Mn(2+) serves as cofactor.

Its subcellular location is the cell inner membrane. The enzyme catalyses UDP-2-N,3-O-bis[(3R)-3-hydroxytetradecanoyl]-alpha-D-glucosamine + H2O = 2-N,3-O-bis[(3R)-3-hydroxytetradecanoyl]-alpha-D-glucosaminyl 1-phosphate + UMP + 2 H(+). It participates in glycolipid biosynthesis; lipid IV(A) biosynthesis; lipid IV(A) from (3R)-3-hydroxytetradecanoyl-[acyl-carrier-protein] and UDP-N-acetyl-alpha-D-glucosamine: step 4/6. Its function is as follows. Hydrolyzes the pyrophosphate bond of UDP-2,3-diacylglucosamine to yield 2,3-diacylglucosamine 1-phosphate (lipid X) and UMP by catalyzing the attack of water at the alpha-P atom. Involved in the biosynthesis of lipid A, a phosphorylated glycolipid that anchors the lipopolysaccharide to the outer membrane of the cell. In Stenotrophomonas maltophilia (strain K279a), this protein is UDP-2,3-diacylglucosamine hydrolase.